The following is a 390-amino-acid chain: uncharacterized protein (390 aa).

This sequence belongs to the peptidase M24 family.

This is an uncharacterized protein from Sinorhizobium fredii (strain NBRC 101917 / NGR234).